We begin with the raw amino-acid sequence, 201 residues long: UPF0301 protein CE2927 (201 aa).

It belongs to the UPF0301 (AlgH) family.

The sequence is that of UPF0301 protein CE2927 from Corynebacterium efficiens (strain DSM 44549 / YS-314 / AJ 12310 / JCM 11189 / NBRC 100395).